A 155-amino-acid polypeptide reads, in one-letter code: 17.3 kDa class II heat shock protein (155 aa).

Residues 39–155 form the sHSP domain; it reads DAKAMAATPA…KPKTIEVKVA (117 aa).

The protein belongs to the small heat shock protein (HSP20) family.

It is found in the cytoplasm. The polypeptide is 17.3 kDa class II heat shock protein (Solanum peruvianum (Peruvian tomato)).